A 644-amino-acid chain; its full sequence is Core protein VP4 (644 aa).

The protein belongs to the orbivirus VP4 family.

The protein localises to the virion. Functionally, the VP4 protein is one of the five proteins (with VP1, VP3, VP6 and VP7) which form the inner capsid of the virus. The chain is Core protein VP4 (Segment-4) from Bluetongue virus 13 (isolate USA) (BTV 13).